Here is a 436-residue protein sequence, read N- to C-terminus: Trigger factor (436 aa).

Residues D161–P246 enclose the PPIase FKBP-type domain.

The protein belongs to the FKBP-type PPIase family. Tig subfamily.

The protein localises to the cytoplasm. It carries out the reaction [protein]-peptidylproline (omega=180) = [protein]-peptidylproline (omega=0). Its function is as follows. Involved in protein export. Acts as a chaperone by maintaining the newly synthesized protein in an open conformation. Functions as a peptidyl-prolyl cis-trans isomerase. This is Trigger factor from Tolumonas auensis (strain DSM 9187 / NBRC 110442 / TA 4).